The chain runs to 680 residues: Putative cyclin-dependent serine/threonine-protein kinase DDB_G0272797/DDB_G0274007 (680 aa).

The Protein kinase domain maps to 4–381; that stretch reads YIILSKCGQG…SLEALEHPWF (378 aa). Residues 10–18 and Lys33 each bind ATP; that span reads CGQGTYGSV. The active-site Proton acceptor is Asp125. Disordered stretches follow at residues 243-299, 409-444, 483-507, and 597-680; these read QQQQ…LQSP, RQLQ…QRQH, LAQH…QHQQ, and QQQQ…KSNG. Low complexity predominate over residues 257 to 286; it reads NNNNNNNNNNNNNNNNNNNNNNNNNNNNNN. A compositionally biased stretch (polar residues) spans 287-297; sequence KYNNISTSCLQ. 3 stretches are compositionally biased toward low complexity: residues 410–444, 483–494, and 597–616; these read QLQQ…QRQH, LAQHQQYNSQQH, and QQQQ…PPQH. Residues 617-631 are compositionally biased toward basic residues; that stretch reads QHQHQHQHQHQHQHQ. Over residues 632-642 the composition is skewed to low complexity; the sequence is HQPQPQHQHQP. The span at 643–655 shows a compositional bias: pro residues; sequence QPQPQPTPTPTPT. A compositionally biased stretch (low complexity) spans 656–680; the sequence is STPTTTTIPPTITTTIQPTISKSNG.

It belongs to the protein kinase superfamily. CMGC Ser/Thr protein kinase family. CDC2/CDKX subfamily.

It catalyses the reaction L-seryl-[protein] + ATP = O-phospho-L-seryl-[protein] + ADP + H(+). The enzyme catalyses L-threonyl-[protein] + ATP = O-phospho-L-threonyl-[protein] + ADP + H(+). The polypeptide is Putative cyclin-dependent serine/threonine-protein kinase DDB_G0272797/DDB_G0274007 (Dictyostelium discoideum (Social amoeba)).